The primary structure comprises 86 residues: MAETKARIATGKVVSDKMDKTITVLVERTEKHPLYGKFIRRSTKLHAHDENNECQIGDLVKVVETRPYSKSKTWKLVQVVEKAAAV.

It belongs to the universal ribosomal protein uS17 family. In terms of assembly, part of the 30S ribosomal subunit.

Its function is as follows. One of the primary rRNA binding proteins, it binds specifically to the 5'-end of 16S ribosomal RNA. This chain is Small ribosomal subunit protein uS17, found in Marinomonas sp. (strain MWYL1).